A 273-amino-acid chain; its full sequence is Large ribosomal subunit protein uL2 (273 aa).

2 disordered regions span residues 28–53 and 221–273; these read KPFA…TTRH and RGTA…RRSK. A compositionally biased stretch (low complexity) spans 39 to 48; sequence KSGGRNNNGR. Residue Lys242 is modified to N6-acetyllysine.

This sequence belongs to the universal ribosomal protein uL2 family. As to quaternary structure, part of the 50S ribosomal subunit. Forms a bridge to the 30S subunit in the 70S ribosome.

One of the primary rRNA binding proteins. Required for association of the 30S and 50S subunits to form the 70S ribosome, for tRNA binding and peptide bond formation. It has been suggested to have peptidyltransferase activity; this is somewhat controversial. Makes several contacts with the 16S rRNA in the 70S ribosome. In Shigella dysenteriae serotype 1 (strain Sd197), this protein is Large ribosomal subunit protein uL2.